We begin with the raw amino-acid sequence, 609 residues long: Chloride channel CLIC-like protein 1 (609 aa).

Positions 1 to 25 (MKLSSSSSFGLCILVVFFCFVVIES) are cleaved as a signal peptide. The next 3 helical transmembrane spans lie at 212–235 (VSLI…SWFV), 241–260 (FAVS…YMLA), and 358–380 (VTLQ…YGSA). The disordered stretch occupies residues 398 to 553 (EQPPPAVGQR…PSSIDVKTVG (156 aa)). Basic and acidic residues-rich tracts occupy residues 454–474 (ENRE…KRTP) and 507–537 (EEVK…DRSE). A compositionally biased stretch (low complexity) spans 538-547 (PITSEPPSSI).

It belongs to the chloride channel MCLC family. In terms of tissue distribution, expressed in the hindbrain, swim bladder and the eye at 1 day post fertilization (dpf) with increased expression at 3 dpf. At 3 dpf, most prominent expression in the retina, with strong expression in the ganglion cell layer, outer nuclear layer and the retinal pigmented epithelium.

Its subcellular location is the endoplasmic reticulum membrane. It is found in the golgi apparatus membrane. The protein localises to the nucleus membrane. Seems to act as a chloride ion channel. Plays a role in retina development. The protein is Chloride channel CLIC-like protein 1 of Danio rerio (Zebrafish).